The sequence spans 233 residues: tRNA (guanine-N(7)-)-methyltransferase (233 aa).

A disordered region spans residues 1-21 (MTEESHPLRGAGNFFGRRHGK). 4 residues coordinate S-adenosyl-L-methionine: glutamate 64, glutamate 89, aspartate 116, and aspartate 138. Residue aspartate 138 is part of the active site. Substrate is bound by residues lysine 142, aspartate 174, and 212-215 (TRYE).

The protein belongs to the class I-like SAM-binding methyltransferase superfamily. TrmB family.

It carries out the reaction guanosine(46) in tRNA + S-adenosyl-L-methionine = N(7)-methylguanosine(46) in tRNA + S-adenosyl-L-homocysteine. The protein operates within tRNA modification; N(7)-methylguanine-tRNA biosynthesis. In terms of biological role, catalyzes the formation of N(7)-methylguanine at position 46 (m7G46) in tRNA. The sequence is that of tRNA (guanine-N(7)-)-methyltransferase from Brucella anthropi (strain ATCC 49188 / DSM 6882 / CCUG 24695 / JCM 21032 / LMG 3331 / NBRC 15819 / NCTC 12168 / Alc 37) (Ochrobactrum anthropi).